Consider the following 142-residue polypeptide: Large ribosomal subunit protein uL13 (142 aa).

Belongs to the universal ribosomal protein uL13 family. Part of the 50S ribosomal subunit.

Its function is as follows. This protein is one of the early assembly proteins of the 50S ribosomal subunit, although it is not seen to bind rRNA by itself. It is important during the early stages of 50S assembly. The sequence is that of Large ribosomal subunit protein uL13 from Hahella chejuensis (strain KCTC 2396).